We begin with the raw amino-acid sequence, 282 residues long: MKLSCGTSFAFLIMFLFAAQSMHVYAGSFHKDVQIHWGDGRGKVRDRDGKLLSLSLDKSSGSGFQSNQEFLYGKAEVQMKLVPGNSAGTVTTFYLKSPGTTWDEIDFEFLGNLSGHPYTLHTNVYTKGSGDKEQQFHLWFDPTVNFHTYCITWNPQRIIFTVDGIPIREFKNSESIGVPFPTKQPMRLYASLWEAEHWATRGGLEKTDWSKAPFTAFYRNYNVEGCVWANGKSSCPANSSWFTQQLDSNGQTRMKGVQSKYMVYNYCNDKRRFPRGVPVECS.

Positions 1 to 26 (MKLSCGTSFAFLIMFLFAAQSMHVYA) are cleaved as a signal peptide. In terms of domain architecture, GH16 spans 27-218 (GSFHKDVQIH…WSKAPFTAFY (192 aa)). Glu-104 acts as the Nucleophile in catalysis. Glu-108 (proton donor) is an active-site residue. Glu-108 contributes to the xyloglucan binding site. N-linked (GlcNAc...) asparagine glycosylation occurs at Asn-112. Residues 121–123 (HTN), 131–133 (DKE), 197–198 (HW), and Gly-202 each bind xyloglucan. Residues Cys-226 and Cys-235 are joined by a disulfide bond. N-linked (GlcNAc...) asparagine glycosylation occurs at Asn-238. The cysteines at positions 267 and 281 are disulfide-linked. Arg-272 lines the xyloglucan pocket.

This sequence belongs to the glycosyl hydrolase 16 family. XTH group 2 subfamily. Post-translationally, contains at least one intrachain disulfide bond essential for its enzymatic activity. In terms of tissue distribution, root specific.

It is found in the secreted. The protein localises to the cell wall. Its subcellular location is the extracellular space. The protein resides in the apoplast. The catalysed reaction is breaks a beta-(1-&gt;4) bond in the backbone of a xyloglucan and transfers the xyloglucanyl segment on to O-4 of the non-reducing terminal glucose residue of an acceptor, which can be a xyloglucan or an oligosaccharide of xyloglucan.. In terms of biological role, catalyzes xyloglucan endohydrolysis (XEH) and/or endotransglycosylation (XET). Cleaves and religates xyloglucan polymers, an essential constituent of the primary cell wall, and thereby participates in cell wall construction of growing tissues. The protein is Probable xyloglucan endotransglucosylase/hydrolase protein 18 (XTH18) of Arabidopsis thaliana (Mouse-ear cress).